We begin with the raw amino-acid sequence, 89 residues long: Envelope glycoprotein N (89 aa).

The N-terminal stretch at 1 to 24 (MAPGRGVLLLICLCLMDNVSQVVC) is a signal peptide. At 25-56 (SQNSTTPSKFPTFYSYDCNADTYAPQLTSFST) the chain is on the virion surface side. Residues 57-77 (IWTLLNVLVMTIACVIYLIYM) form a helical membrane-spanning segment. Residues 78 to 89 (CFNKFVATMTNT) lie on the Intravirion side of the membrane.

Belongs to the herpesviridae glycoprotein N family. As to quaternary structure, interacts (via N-terminus) with gM (via N-terminus). The gM-gN heterodimer forms the gCII complex.

The protein resides in the virion membrane. It localises to the host membrane. The protein localises to the host Golgi apparatus. It is found in the host trans-Golgi network. Functionally, envelope glycoprotein necessary for proper maturation of gM and modulation of its membrane fusion activity. Also plays a critical role in virion morphogenesis. In Equine herpesvirus 2 (strain 86/87) (EHV-2), this protein is Envelope glycoprotein N.